Reading from the N-terminus, the 67-residue chain is DNA-directed RNA polymerase subunit omega (67 aa).

The protein belongs to the RNA polymerase subunit omega family. As to quaternary structure, the RNAP catalytic core consists of 2 alpha, 1 beta, 1 beta' and 1 omega subunit. When a sigma factor is associated with the core the holoenzyme is formed, which can initiate transcription.

It catalyses the reaction RNA(n) + a ribonucleoside 5'-triphosphate = RNA(n+1) + diphosphate. In terms of biological role, promotes RNA polymerase assembly. Latches the N- and C-terminal regions of the beta' subunit thereby facilitating its interaction with the beta and alpha subunits. The sequence is that of DNA-directed RNA polymerase subunit omega from Nitrosomonas eutropha (strain DSM 101675 / C91 / Nm57).